Consider the following 319-residue polypeptide: Acetyl-coenzyme A carboxylase carboxyl transferase subunit alpha (319 aa).

The region spanning 39-296 (EINRLRSKSI…KTQLLLDLTE (258 aa)) is the CoA carboxyltransferase C-terminal domain.

This sequence belongs to the AccA family. Acetyl-CoA carboxylase is a heterohexamer composed of biotin carboxyl carrier protein (AccB), biotin carboxylase (AccC) and two subunits each of ACCase subunit alpha (AccA) and ACCase subunit beta (AccD).

Its subcellular location is the cytoplasm. It carries out the reaction N(6)-carboxybiotinyl-L-lysyl-[protein] + acetyl-CoA = N(6)-biotinyl-L-lysyl-[protein] + malonyl-CoA. The protein operates within lipid metabolism; malonyl-CoA biosynthesis; malonyl-CoA from acetyl-CoA: step 1/1. Functionally, component of the acetyl coenzyme A carboxylase (ACC) complex. First, biotin carboxylase catalyzes the carboxylation of biotin on its carrier protein (BCCP) and then the CO(2) group is transferred by the carboxyltransferase to acetyl-CoA to form malonyl-CoA. The polypeptide is Acetyl-coenzyme A carboxylase carboxyl transferase subunit alpha (Blochmanniella pennsylvanica (strain BPEN)).